Reading from the N-terminus, the 359-residue chain is MSRKILVLPGDGIGPEITREAVKILNACREAGLEASIEEGLVGGAGIDAHGVPLPDETLASAKAADAVLLGAVGGPQWDKIEDLSKRPEKGLLGLRKNLNLFGNLRPALLYPQLASASSLKPEIVAGLDIMIVRELTGGIYFGQPRGIEERDGERVGYNTYIYAEHEIERIGRVAFEMARERGGKLCSVDKANVLEATILWREVMERLAPEYPDVALSHMYVDNAAMQLVRAPKQFDVIVTGNMFGDILSDAAAMLTGSIGMLPSASLNEQRQGMYEPCHGSAPDIAGQGIANPLATILSVAMMLRYSLEAPQLAERIERAVGTVLDQGLRTADIAFEGTAPVSTQAMGDAVLAAFQAQ.

The substrate site is built by Arg-96, Arg-106, Arg-134, and Asp-223. Asp-223, Asp-247, and Asp-251 together coordinate Mg(2+). Position 281–293 (281–293 (GSAPDIAGQGIAN)) interacts with NAD(+).

Belongs to the isocitrate and isopropylmalate dehydrogenases family. LeuB type 1 subfamily. In terms of assembly, homodimer. Mg(2+) is required as a cofactor. It depends on Mn(2+) as a cofactor.

Its subcellular location is the cytoplasm. The enzyme catalyses (2R,3S)-3-isopropylmalate + NAD(+) = 4-methyl-2-oxopentanoate + CO2 + NADH. It participates in amino-acid biosynthesis; L-leucine biosynthesis; L-leucine from 3-methyl-2-oxobutanoate: step 3/4. In terms of biological role, catalyzes the oxidation of 3-carboxy-2-hydroxy-4-methylpentanoate (3-isopropylmalate) to 3-carboxy-4-methyl-2-oxopentanoate. The product decarboxylates to 4-methyl-2 oxopentanoate. The polypeptide is 3-isopropylmalate dehydrogenase (Chromohalobacter salexigens (strain ATCC BAA-138 / DSM 3043 / CIP 106854 / NCIMB 13768 / 1H11)).